A 173-amino-acid chain; its full sequence is Bifunctional protein PyrR (173 aa).

Residues 93-105 (IILVDDVLYTGRT) carry the PRPP-binding motif.

The protein belongs to the purine/pyrimidine phosphoribosyltransferase family. PyrR subfamily. In terms of assembly, homodimer and homohexamer; in equilibrium.

It catalyses the reaction UMP + diphosphate = 5-phospho-alpha-D-ribose 1-diphosphate + uracil. Its function is as follows. Regulates transcriptional attenuation of the pyrimidine nucleotide (pyr) operon by binding in a uridine-dependent manner to specific sites on pyr mRNA. This disrupts an antiterminator hairpin in the RNA and favors formation of a downstream transcription terminator, leading to a reduced expression of downstream genes. In terms of biological role, also displays a weak uracil phosphoribosyltransferase activity which is not physiologically significant. This chain is Bifunctional protein PyrR, found in Streptococcus equi subsp. zooepidemicus (strain H70).